Reading from the N-terminus, the 626-residue chain is (+)-3-carene synthase 1, chloroplastic (626 aa).

The N-terminal 45 residues, 1 to 45 (MSLISAVPLASSCVSKSLISSVREHTALRRAIATLQMSRRGKSVA), are a transit peptide targeting the chloroplast. Residues D377, D381, and D529 each contribute to the Mg(2+) site. The DDXXD motif signature appears at 377-381 (DDMYD).

This sequence belongs to the terpene synthase family. Tpsd subfamily. The cofactor is Mg(2+). Requires Mn(2+) as cofactor.

The protein resides in the plastid. It is found in the chloroplast. It catalyses the reaction (2E)-geranyl diphosphate = (+)-car-3-ene + diphosphate. It carries out the reaction (2E)-geranyl diphosphate = terpinolene + diphosphate. Its pathway is terpene metabolism; oleoresin biosynthesis. It participates in secondary metabolite biosynthesis; terpenoid biosynthesis. Functionally, monoterpene synthase (TPS) involved in the biosynthesis of monoterpene natural products included in conifer oleoresin secretions and volatile emissions; these compounds contribute to biotic and abiotic stress defense against herbivores and pathogens. Catalyzes the conversion of (2E)-geranyl diphosphate (GPP) to (+)-car-3-ene and, to a lower extent, to terpinolene. This Pinus contorta (Shore pine) protein is (+)-3-carene synthase 1, chloroplastic.